The chain runs to 346 residues: MEADILDGKLKRVEVSKKGLVNCNQVDVNQLVPIKYKWAWEHYLNGCANNWLPTEVPMARDIELWKSDELSEDERRVILLNLGFFSTAESLVGNNIVLAIFKHITNPEARQYLLRQAFEEAVHTHTFLYICESLGLDEGEVFNAYNERASIRAKDDFQMTLTVDVLDPNFSVQSSEGLGQFIKNLVGYYIIMEGIFFYSGFVMILSFHRQNKMTGIGEQYQYILRDETIHLNFGIDLINGIKEENPEVWTTELQEEIVALIEKAVELEIEYAKDCLPRGILGLRSSMFIDYVRHIADRRLERIGLKPIYHSRNPFPWMSETMDLNKEKNFFETRVTEYQTAGNLSW.

Fe cation is bound by residues glutamate 89, glutamate 120, and histidine 123. Tyrosine 129 is a catalytic residue. Fe cation-binding residues include glutamate 193, glutamate 227, and histidine 230.

It belongs to the ribonucleoside diphosphate reductase small chain family. Tetramer of two alpha and two beta subunits. Fe cation is required as a cofactor.

The enzyme catalyses a 2'-deoxyribonucleoside 5'-diphosphate + [thioredoxin]-disulfide + H2O = a ribonucleoside 5'-diphosphate + [thioredoxin]-dithiol. Functionally, provides the precursors necessary for DNA synthesis. Catalyzes the biosynthesis of deoxyribonucleotides from the corresponding ribonucleotides. The sequence is that of Ribonucleoside-diphosphate reductase subunit beta (nrdB) from Chlamydia pneumoniae (Chlamydophila pneumoniae).